Here is a 367-residue protein sequence, read N- to C-terminus: Histidinol-phosphate aminotransferase (367 aa).

Residue Lys226 is modified to N6-(pyridoxal phosphate)lysine.

This sequence belongs to the class-II pyridoxal-phosphate-dependent aminotransferase family. Histidinol-phosphate aminotransferase subfamily. Homodimer. It depends on pyridoxal 5'-phosphate as a cofactor.

It carries out the reaction L-histidinol phosphate + 2-oxoglutarate = 3-(imidazol-4-yl)-2-oxopropyl phosphate + L-glutamate. The protein operates within amino-acid biosynthesis; L-histidine biosynthesis; L-histidine from 5-phospho-alpha-D-ribose 1-diphosphate: step 7/9. The protein is Histidinol-phosphate aminotransferase of Aliarcobacter butzleri (strain RM4018) (Arcobacter butzleri).